The sequence spans 549 residues: Glucose-6-phosphate isomerase (549 aa).

Residues lysine 80, lysine 228, and lysine 234 each carry the N6-acetyllysine modification. Residue glutamate 355 is the Proton donor of the active site. Active-site residues include histidine 386 and lysine 514.

This sequence belongs to the GPI family.

Its subcellular location is the cytoplasm. It catalyses the reaction alpha-D-glucose 6-phosphate = beta-D-fructose 6-phosphate. The protein operates within carbohydrate biosynthesis; gluconeogenesis. Its pathway is carbohydrate degradation; glycolysis; D-glyceraldehyde 3-phosphate and glycerone phosphate from D-glucose: step 2/4. Catalyzes the reversible isomerization of glucose-6-phosphate to fructose-6-phosphate. The sequence is that of Glucose-6-phosphate isomerase from Shigella boydii serotype 4 (strain Sb227).